A 351-amino-acid chain; its full sequence is Chorismate synthase (351 aa).

A disordered region spans residues 39-60; it reads EDIQRDLERRRPGKRLTSPRGE. Positions 48 and 53 each coordinate NADP(+). FMN-binding positions include 124–126, Ala-276, 291–295, and Arg-317; these read RSS and KPIPS.

The protein belongs to the chorismate synthase family. In terms of assembly, homotetramer. Requires FMNH2 as cofactor.

The catalysed reaction is 5-O-(1-carboxyvinyl)-3-phosphoshikimate = chorismate + phosphate. It functions in the pathway metabolic intermediate biosynthesis; chorismate biosynthesis; chorismate from D-erythrose 4-phosphate and phosphoenolpyruvate: step 7/7. Functionally, catalyzes the anti-1,4-elimination of the C-3 phosphate and the C-6 proR hydrogen from 5-enolpyruvylshikimate-3-phosphate (EPSP) to yield chorismate, which is the branch point compound that serves as the starting substrate for the three terminal pathways of aromatic amino acid biosynthesis. This reaction introduces a second double bond into the aromatic ring system. The polypeptide is Chorismate synthase (Syntrophobacter fumaroxidans (strain DSM 10017 / MPOB)).